Consider the following 115-residue polypeptide: Probable mycobacterial cidal antitoxin Rv3188 (115 aa).

The protein belongs to the MbcA/ParS/Xre antitoxin family. Forms a heterotetramer with cognate toxin Rv3189.

Functionally, probable antitoxin component of a type II toxin-antitoxin (TA) system. Neutralizes the activity of cognate toxin Rv3189 by blocking access to the toxin active site. The sequence is that of Probable mycobacterial cidal antitoxin Rv3188 from Mycobacterium tuberculosis (strain ATCC 25618 / H37Rv).